The following is a 258-amino-acid chain: MPKTLTEKLNAIKATGKGIFVPYIMAGDHEKGLDGLAETIHFLEDLGVSAIEVGIPFSDPVADGPVIEEAGLRSLAHGTSTQALVETLKTIETEIPLVIMTYFNPLFQYGVENFVKDLADTAVKGLIIPDLPHEHANFVEPFLADTDIALIPLVSLTTGIERQKELIEGAEGFVYAVAINGVTGKSGNYRADLDKHLAQLHQVADIPVLTGFGVSSQADLERFNAVSDGVIVGSKIVKALHQGEPIQDFIRQAVAYQK.

Residues glutamate 52 and aspartate 63 each act as proton acceptor in the active site.

Belongs to the TrpA family. As to quaternary structure, tetramer of two alpha and two beta chains.

It catalyses the reaction (1S,2R)-1-C-(indol-3-yl)glycerol 3-phosphate + L-serine = D-glyceraldehyde 3-phosphate + L-tryptophan + H2O. Its pathway is amino-acid biosynthesis; L-tryptophan biosynthesis; L-tryptophan from chorismate: step 5/5. In terms of biological role, the alpha subunit is responsible for the aldol cleavage of indoleglycerol phosphate to indole and glyceraldehyde 3-phosphate. The protein is Tryptophan synthase alpha chain of Streptococcus pneumoniae serotype 19F (strain G54).